Here is a 484-residue protein sequence, read N- to C-terminus: Arginine ADP-riboxanase OspC2 (484 aa).

The NAD(+) site is built by histidine 143, glutamine 144, serine 145, leucine 149, isoleucine 162, asparagine 172, phenylalanine 188, histidine 206, phenylalanine 211, aspartate 231, and glutamate 326. Residue glutamate 326 is part of the active site. 2 ANK repeats span residues leucine 414–lysine 444 and serine 451–lysine 480.

Belongs to the OspC family.

The protein resides in the secreted. It catalyses the reaction L-arginyl-[protein] + NAD(+) = ADP-riboxanated L-argininyl-[protein] + nicotinamide + NH4(+) + H(+). Functionally, ADP-riboxanase effector that mediates arginine ADP-riboxanation of host caspases. ADP-riboxanation of host apoptotic caspases (CASP3 and CASP9) prevents their activation, thereby inhibiting host cell extrinsic and intrinsic apoptosis. Does not catalyze ADP-riboxanation of host CASP4/CASP11 or CASP8. In contrast to Ospc1 and OspC3, not able to inactivate host calmodulin. In Shigella flexneri, this protein is Arginine ADP-riboxanase OspC2.